The chain runs to 677 residues: Protein hook (677 aa).

The region spanning 6-123 is the Calponin-homology (CH) domain; sequence NEMYYSLLEW…RLLQLVLGCA (118 aa). 2 coiled-coil regions span residues 135-436 and 478-588; these read EIMC…KCGH and QTAL…AKEV.

Belongs to the hook family. Homodimer. Interacts with microtubules via its N-terminus.

The protein localises to the cytoplasm. The protein resides in the cytoskeleton. Its subcellular location is the endosome. It localises to the synapse. Functionally, involved in endocytic trafficking by stabilizing organelles of the endocytic pathway. Probably acts as a cytoskeletal linker protein required to tether endosome vesicles to the cytoskeleton. Involved in modulation of endocytosis at stages required for down-regulation of membrane proteins that control synapse size. Not involved in synaptic vesicle recycling. Required in R7 cells for boss endocytosis into multivesicular bodies (MVBs). Has a role in regulating adult longevity. This is Protein hook from Drosophila persimilis (Fruit fly).